We begin with the raw amino-acid sequence, 31 residues long: Beta-endorphin (31 aa).

Belongs to the POMC family.

It localises to the secreted. Functionally, beta-endorphin and Met-enkephalin are endogenous opiates. This chain is Beta-endorphin (POMC), found in Camelus dromedarius (Dromedary).